The primary structure comprises 360 residues: Glutamate--cysteine ligase (360 aa).

This sequence belongs to the glutamate--cysteine ligase type 2 family. YbdK subfamily.

It carries out the reaction L-cysteine + L-glutamate + ATP = gamma-L-glutamyl-L-cysteine + ADP + phosphate + H(+). Its function is as follows. Catalyzes the synthesis of gamma-glutamylcysteine (gamma-GC), the main low-molecular-weight thiol compound instead of glutathione in halophilic archaea. The chain is Glutamate--cysteine ligase from Halobacterium salinarum (strain ATCC 29341 / DSM 671 / R1).